The following is a 515-amino-acid chain: MRRSTLYSLIFIIILTAFAVWVDLPGSRNVFGRQAEVVEGLDLQGGLQVLLQARHVGGKAPTREQMEEVRQVVEQRVNSLGLTEPVVQLQGSDRIVVELPGVKDPEQAIRTFQGTGLLEFIDAGDTPLQVGTLVNTTLGPAITNGNQNQNSTKNGTPTPGTTPTPESTPQANQTPVAANVTPTPEDPQFQQALQATPPEQLQRTYTTVITGNDIANARPDFDPTTGEPVVSFELKPEAAKKFADFTTQNVGKYLAIALDKKIISSPQIRDPITNGRGVITGVTREEARTLAIQIRSGSLSVPLDIISSNTVGATLGNDSVQRSIRAGLIGIGAVALFMILYYRLPGFVSVVALAIYAAVVFALFKLIPVTLTLAGIAGFILSVGMAVDANVLIFARLKDELRRGRGLIQAIDVGFKNAWPSIRDSNISTLITCAILIWFGSRFGASVIKGFAITLAIGVIVSMFTAIFVTRTLLQVVLSMVHTRNLWIWGIGKNQLPEPEGRTLQPAKSSRTTQA.

The chain crosses the membrane as a helical span at residues 6 to 26 (LYSLIFIIILTAFAVWVDLPG). The tract at residues 141-186 (AITNGNQNQNSTKNGTPTPGTTPTPESTPQANQTPVAANVTPTPED) is disordered. The segment covering 150-169 (NSTKNGTPTPGTTPTPESTP) has biased composition (low complexity). Residues 170–186 (QANQTPVAANVTPTPED) are compositionally biased toward polar residues. Transmembrane regions (helical) follow at residues 322 to 342 (RSIR…ILYY), 344 to 364 (LPGF…FALF), 367 to 387 (IPVT…GMAV), 427 to 447 (ISTL…GASV), and 450 to 470 (GFAI…IFVT).

This sequence belongs to the SecD/SecF family. SecD subfamily. Forms a complex with SecF. Part of the essential Sec protein translocation apparatus which comprises SecA, SecYEG and auxiliary proteins SecDF. Other proteins may also be involved.

The protein localises to the cell membrane. In terms of biological role, part of the Sec protein translocase complex. Interacts with the SecYEG preprotein conducting channel. SecDF uses the proton motive force (PMF) to complete protein translocation after the ATP-dependent function of SecA. The sequence is that of Protein translocase subunit SecD from Thermobaculum terrenum (strain ATCC BAA-798 / CCMEE 7001 / YNP1).